The primary structure comprises 931 residues: Dymeclin (931 aa).

3 disordered regions span residues 1 to 53 (MGVA…SSTT), 599 to 618 (SPSK…NTNN), and 839 to 931 (DANN…EKTN). G2 carries the N-myristoyl glycine lipid modification. Low complexity-rich tracts occupy residues 27–49 (NNNK…NNNN) and 601–618 (SKIN…NTNN). The span at 839–858 (DANNFTPKKQLSSDQLHSPP) shows a compositional bias: polar residues. Composition is skewed to low complexity over residues 859 to 876 (TNTT…SSNT) and 889 to 901 (QLQQ…NQEQ). Residues 919 to 931 (TTGVELSSTEKTN) show a composition bias toward polar residues.

It belongs to the dymeclin family.

This chain is Dymeclin (dym), found in Dictyostelium discoideum (Social amoeba).